Consider the following 112-residue polypeptide: Cryptic phage CTXphi transcriptional repressor RstR (112 aa).

The region spanning 7 to 61 (LANQRKAINKTQAQMADEIGISLTSYKKYESGEGLPTMENLVKIADALEISIDEL) is the HTH cro/C1-type domain. Residues 18–37 (QAQMADEIGISLTSYKKYES) constitute a DNA-binding region (H-T-H motif).

Its function is as follows. Transcriptional repressor of the integrated CTXPhi phage gene rstA2. The protein is Cryptic phage CTXphi transcriptional repressor RstR (rstR1) of Vibrio cholerae serotype O1 (strain ATCC 39315 / El Tor Inaba N16961).